The chain runs to 148 residues: Large ribosomal subunit protein uL15 (148 aa).

The interval Glu-12–Gly-52 is disordered. Residues Arg-21–Gly-32 are compositionally biased toward gly residues.

It belongs to the universal ribosomal protein uL15 family. In terms of assembly, part of the 50S ribosomal subunit.

In terms of biological role, binds to the 23S rRNA. The protein is Large ribosomal subunit protein uL15 of Maridesulfovibrio salexigens (strain ATCC 14822 / DSM 2638 / NCIMB 8403 / VKM B-1763) (Desulfovibrio salexigens).